The following is a 146-amino-acid chain: Leghemoglobin 49 (146 aa).

The Globin domain maps to 2–146 (GFTQQQEALV…LATAIKKAMS (145 aa)). A nitrated tyrosine mark is found at Y24 and Y29. S44 lines the heme b pocket. Phosphoserine is present on S44. H61 contacts O2. Residues H93 and K96 each coordinate heme b. The residue at position 134 (Y134) is a Nitrated tyrosine.

Belongs to the plant globin family. In terms of assembly, monomer. In terms of processing, nitrated in effective nodules and particularly in hypoxic conditions; this mechanism may play a protective role in the symbiosis by buffering toxic peroxynitrite NO(2)(-). Nitration level decrease during nodule senescence. Post-translationally, phosphorylation at Ser-44 disrupts the molecular environment of its porphyrin ring oxygen binding pocket, thus leading to a reduced oxygen consumption and to the delivery of oxygen O(2) to symbiosomes. In terms of tissue distribution, accumulates in root nodules after inoculation by bacteria of the genus Rhizobium.

It is found in the cytoplasm. Its subcellular location is the cytosol. The protein localises to the nucleus. Its function is as follows. Leghemoglobin that reversibly binds oxygen O(2) through a pentacoordinated heme iron. In root nodules, facilitates the diffusion of oxygen to the bacteroids while preventing the bacterial nitrogenase from being inactivated by buffering dioxygen, nitric oxide and carbon monoxide, and promoting the formation of reactive oxygen species (ROS, e.g. H(2)O(2)). This role is essential for symbiotic nitrogen fixation (SNF). The protein is Leghemoglobin 49 of Vicia faba (Broad bean).